Here is an 86-residue protein sequence, read N- to C-terminus: U1-theraphotoxin-Pc1a (86 aa).

Residues 1-21 (MMRVLIVTAVFTFFLVLTSSG) form the signal peptide. The propeptide occupies 22 to 49 (HDEDNEQRNILEGMFLDRAIETPKGLEE). 3 disulfides stabilise this stretch: Cys53–Cys70, Cys60–Cys75, and Cys69–Cys80. Position 84 is a valine amide (Val84).

As to expression, expressed by the venom gland.

Its subcellular location is the secreted. Possesses strong antiplasmodial activity against the intra-erythrocyte stage of P.falciparum in vitro. IC(50) for inhibiting P.falciparum growth is 1.59 uM. Interacts with infected and healthy erythrocytes. Does not lyse erythrocytes, is not cytotoxic to nucleated mammalian cells, and does not inhibit neuromuscular function. Has neither antibacterial nor antifungal activity. The sequence is that of U1-theraphotoxin-Pc1a from Psalmopoeus cambridgei (Trinidad chevron tarantula).